The following is a 285-amino-acid chain: Small ribosomal subunit biogenesis GTPase RsgA (285 aa).

In terms of domain architecture, CP-type G spans 56-217 (DNLLIRPIVA…IIDTPGFSSI (162 aa)). GTP is bound by residues 105–108 (NKID) and 159–167 (GPSGVGKSS). Zn(2+)-binding residues include C241, C246, H248, and C254.

The protein belongs to the TRAFAC class YlqF/YawG GTPase family. RsgA subfamily. Monomer. Associates with 30S ribosomal subunit, binds 16S rRNA. Requires Zn(2+) as cofactor.

The protein resides in the cytoplasm. Functionally, one of several proteins that assist in the late maturation steps of the functional core of the 30S ribosomal subunit. Helps release RbfA from mature subunits. May play a role in the assembly of ribosomal proteins into the subunit. Circularly permuted GTPase that catalyzes slow GTP hydrolysis, GTPase activity is stimulated by the 30S ribosomal subunit. In Fusobacterium nucleatum subsp. nucleatum (strain ATCC 25586 / DSM 15643 / BCRC 10681 / CIP 101130 / JCM 8532 / KCTC 2640 / LMG 13131 / VPI 4355), this protein is Small ribosomal subunit biogenesis GTPase RsgA.